A 469-amino-acid polypeptide reads, in one-letter code: 3-isopropylmalate dehydratase large subunit (469 aa).

3 residues coordinate [4Fe-4S] cluster: cysteine 347, cysteine 407, and cysteine 410.

Belongs to the aconitase/IPM isomerase family. LeuC type 1 subfamily. As to quaternary structure, heterodimer of LeuC and LeuD. The cofactor is [4Fe-4S] cluster.

It catalyses the reaction (2R,3S)-3-isopropylmalate = (2S)-2-isopropylmalate. The protein operates within amino-acid biosynthesis; L-leucine biosynthesis; L-leucine from 3-methyl-2-oxobutanoate: step 2/4. Catalyzes the isomerization between 2-isopropylmalate and 3-isopropylmalate, via the formation of 2-isopropylmaleate. This chain is 3-isopropylmalate dehydratase large subunit, found in Prochlorococcus marinus subsp. pastoris (strain CCMP1986 / NIES-2087 / MED4).